Consider the following 455-residue polypeptide: T-box protein VegT-B (455 aa).

The T-box DNA-binding region spans leucine 57–glutamate 230. The segment covering arginine 229 to leucine 241 has biased composition (basic and acidic residues). Disordered regions lie at residues arginine 229–glutamate 276 and alanine 295–threonine 350. Over residues glycine 308–serine 326 the composition is skewed to polar residues.

In terms of assembly, forms a repression complex on the promoters of the nodal/nr1 and siamois genes with the maternal factors tcf7l1/tcf3 and pouf5.1/oct-25. Interacts (via C-terminus) with tcf7l1/tcf3 (via N-terminus). Also interacts with the other POU-domain transcription factors pou5f1.2/oct-91 and pou5f1.3/oct-60. As to expression, maternally localized to the vegetal hemisphere of oocytes. Zygotic expression parallels blastopore formation and shifts from dorsal expression in the marginal zone of late blastula and early gastrula stages to a ventral/lateral expression at later stages. During neurula and tailbud stages, expressed in the posterior and anterior ends of the embryo. During tailbud stages, expressed in a subset of interneurons in the neural tube.

The protein resides in the nucleus. Transcription factor required for both mesoderm and endoderm formation in the embryo; signaling determinants and concentration levels may determine which germ layer is formed. Acts together with beta-catenin to activate genes that are responsible for mesoderm induction including wnt-8, eomes t/bra, siamois, mix1 and sox17. Directly binds to promoter DNA. Patterns the mesoderm along the dorsoventral and posterior axis. Activates siamois gene transcription when alone or in combination with beta-catenin, but inhibits siamois transcription in combination with pou5f1.1/oct-25. The sequence is that of T-box protein VegT-B (vegt-b) from Xenopus laevis (African clawed frog).